The primary structure comprises 389 residues: Growth/differentiation factor 2 (389 aa).

The signal sequence occupies residues 1 to 20 (MWRVGHLLLLMSIVFRITEE). Residues 21–280 (KSLGDAGSLE…PVSNRHRRRK (260 aa)) constitute a propeptide that is removed on maturation. Asn-65, Asn-118, Asn-127, and Asn-232 each carry an N-linked (GlcNAc...) asparagine glycan. Residues 263–272 (QQQVGNQAPV) show a composition bias toward polar residues. The segment at 263–284 (QQQVGNQAPVSNRHRRRKRKAK) is disordered. Residues 274-284 (NRHRRRKRKAK) show a composition bias toward basic residues. 3 cysteine pairs are disulfide-bonded: Cys-288-Cys-354, Cys-317-Cys-386, and Cys-321-Cys-388. The N-linked (GlcNAc...) asparagine glycan is linked to Asn-342.

It belongs to the TGF-beta family. As to quaternary structure, homodimer; disulfide-linked. In terms of processing, a reversible disulfide bond can be formed between the two subunits in the homodimer; this has no effect on gdf2 activity.

Its subcellular location is the secreted. Its function is as follows. Potent circulating inhibitor of angiogenesis. Signals through the type I activin receptor ACVRL1 but not other Alks. Signaling through SMAD1 in endothelial cells requires TGF-beta coreceptor endoglin/eng. The polypeptide is Growth/differentiation factor 2 (gdf2) (Danio rerio (Zebrafish)).